Consider the following 242-residue polypeptide: UPF0273 protein MJ1359 (242 aa).

The region spanning 2–242 is the KaiC domain; the sequence is KRVKTGIPGM…VYPDKVLKLR (241 aa). 29–36 is an ATP binding site; sequence GGPGTGKS.

This sequence belongs to the UPF0273 family.

The polypeptide is UPF0273 protein MJ1359 (Methanocaldococcus jannaschii (strain ATCC 43067 / DSM 2661 / JAL-1 / JCM 10045 / NBRC 100440) (Methanococcus jannaschii)).